A 329-amino-acid polypeptide reads, in one-letter code: Vitamin B12 import system permease protein BtuC (329 aa).

A run of 9 helical transmembrane segments spans residues 18-38 (WLLS…CAGE), 64-84 (LAVL…QALF), 91-111 (PGLL…VLLG), 115-135 (LPGW…TLIL), 149-169 (LLAG…AIYF), 191-208 (WQQS…IWIC), 243-263 (GWMV…GLVI), 277-297 (VLLP…DVVA), and 305-325 (ELPI…WLLL).

This sequence belongs to the binding-protein-dependent transport system permease family. FecCD subfamily. As to quaternary structure, the complex is composed of two ATP-binding proteins (BtuD), two transmembrane proteins (BtuC) and a solute-binding protein (BtuF).

The protein localises to the cell inner membrane. In terms of biological role, part of the ABC transporter complex BtuCDF involved in vitamin B12 import. Involved in the translocation of the substrate across the membrane. In Salmonella arizonae (strain ATCC BAA-731 / CDC346-86 / RSK2980), this protein is Vitamin B12 import system permease protein BtuC.